The primary structure comprises 29 residues: Dander allergen Equ c 2.0101 (29 aa).

It belongs to the calycin superfamily. Lipocalin family.

It localises to the secreted. The chain is Dander allergen Equ c 2.0101 from Equus caballus (Horse).